Consider the following 622-residue polypeptide: uncharacterized protein (622 aa).

[4Fe-4S] cluster is bound by residues Cys-302, Cys-306, Cys-310, and Cys-521.

It belongs to the AOR/FOR family. The cofactor is [4Fe-4S] cluster.

This is an uncharacterized protein from Methanocaldococcus jannaschii (strain ATCC 43067 / DSM 2661 / JAL-1 / JCM 10045 / NBRC 100440) (Methanococcus jannaschii).